A 65-amino-acid chain; its full sequence is Large ribosomal subunit protein bL35 (65 aa).

Over residues 1–16 the composition is skewed to basic residues; sequence MPKMKTKKSAAKRFKV. The tract at residues 1–25 is disordered; the sequence is MPKMKTKKSAAKRFKVRGSGSIKRG.

This sequence belongs to the bacterial ribosomal protein bL35 family.

This chain is Large ribosomal subunit protein bL35, found in Bordetella parapertussis (strain 12822 / ATCC BAA-587 / NCTC 13253).